Reading from the N-terminus, the 285-residue chain is tRNA-cytidine(32) 2-sulfurtransferase (285 aa).

The PP-loop motif signature appears at 48–53 (SGGKDS). [4Fe-4S] cluster is bound by residues C122, C125, and C213.

It belongs to the TtcA family. Homodimer. The cofactor is Mg(2+). [4Fe-4S] cluster serves as cofactor.

It is found in the cytoplasm. The enzyme catalyses cytidine(32) in tRNA + S-sulfanyl-L-cysteinyl-[cysteine desulfurase] + AH2 + ATP = 2-thiocytidine(32) in tRNA + L-cysteinyl-[cysteine desulfurase] + A + AMP + diphosphate + H(+). Its pathway is tRNA modification. Its function is as follows. Catalyzes the ATP-dependent 2-thiolation of cytidine in position 32 of tRNA, to form 2-thiocytidine (s(2)C32). The sulfur atoms are provided by the cysteine/cysteine desulfurase (IscS) system. The chain is tRNA-cytidine(32) 2-sulfurtransferase from Cytophaga hutchinsonii (strain ATCC 33406 / DSM 1761 / CIP 103989 / NBRC 15051 / NCIMB 9469 / D465).